Reading from the N-terminus, the 232-residue chain is Membrane steroid-binding protein 1 (232 aa).

The chain crosses the membrane as a helical span at residues 25–45; it reads AAFFTAVAAAAALYHVVSGIF. Disordered regions lie at residues 48 to 77 and 172 to 232; these read PPPPPPPRPRDEPEAEPLPPPVQLGEVSEE and TVPV…AKES. A Cytochrome b5 heme-binding domain is found at 71-170; sequence LGEVSEEELR…GKYVKVGTVK (100 aa). The steroid-binding stretch occupies residues 73-170; that stretch reads EVSEEELRQY…GKYVKVGTVK (98 aa). Residues 179–193 are compositionally biased toward low complexity; that stretch reads APSTSPETTETAAAA. The span at 194–219 shows a compositional bias: basic and acidic residues; sequence EPEKAPATEEKPREVSSEEVKEKEDA.

Belongs to the cytochrome b5 family. MAPR subfamily. As to quaternary structure, interacts with SERL2. Expressed in leaf sheaths, leaf blades and panicles.

Its subcellular location is the cell membrane. Its function is as follows. Binds multiple steroid compounds. May act as a coreceptor with SERL2 and enhance its endocytosis. The sequence is that of Membrane steroid-binding protein 1 from Oryza sativa subsp. japonica (Rice).